The following is a 584-amino-acid chain: UvrABC system protein C (584 aa).

The GIY-YIG domain occupies Asn-12–Val-89. Residues Asn-194–Ile-229 enclose the UVR domain.

Belongs to the UvrC family. As to quaternary structure, interacts with UvrB in an incision complex.

The protein resides in the cytoplasm. Its function is as follows. The UvrABC repair system catalyzes the recognition and processing of DNA lesions. UvrC both incises the 5' and 3' sides of the lesion. The N-terminal half is responsible for the 3' incision and the C-terminal half is responsible for the 5' incision. This chain is UvrABC system protein C, found in Mycoplasma mycoides subsp. mycoides SC (strain CCUG 32753 / NCTC 10114 / PG1).